A 119-amino-acid chain; its full sequence is MDYVSLLNQVWQKQVNSSQEGTLAPVRPTYAYRPVQGNLQCPIKWRCIYTFAGYTGTATEPTKVLAKQEAARKVCLRLQEYGRLDGFGLRLRYSTAFEHNRYDASKSYFYTQTSSSSHE.

The 77-residue stretch at 3-79 folds into the DRBM domain; that stretch reads YVSLLNQVWQ…AARKVCLRLQ (77 aa).

In terms of assembly, interacts with host RUNX1 isoform b.

The protein resides in the host nucleus. It localises to the host nucleolus. Its subcellular location is the host mitochondrion. Its function is as follows. Induces host cell G0/G1 arrest and apoptosis. The sequence is that of Non-structural protein 3b from Pipistrellus abramus (Japanese pipistrelle).